The chain runs to 293 residues: Proximal tail tube connector protein (293 aa).

Positions 104 to 240 are disordered; it reads TRLNTTGNKK…NANTTTNDKL (137 aa). Basic and acidic residues-rich tracts occupy residues 112-123, 130-140, and 162-173; these read KKNDTERNDNRD, ADGKSNTKTSD, and NFNRKIDSDQPD. Positions 174–184 are enriched in polar residues; the sequence is SRLNLTTNDGQ. Residues 196 to 238 show a composition bias toward low complexity; sequence NNTNNKRNTTGTNNVTSSAESESTGSGTSDTVTTDNANTTTND.

It belongs to the phi29likevirus proximal tail tube connector protein family.

It localises to the virion. Forms the proximal part of the tail tube. The sequence is that of Proximal tail tube connector protein (11) from Bacillus subtilis (Bacteriophage B103).